A 109-amino-acid chain; its full sequence is Cytochrome c oxidase subunit 6A1, mitochondrial (109 aa).

The N-terminal 24 residues, 1-24 (MAAAAGSRVFGLLGRSRLQLSRCM), are a transit peptide targeting the mitochondrion. Topologically, residues 25–34 (SSGAHGEEGS) are mitochondrial matrix. A helical transmembrane segment spans residues 35-59 (ARMWKALTYFVALPGVGVSMLNVFL). At 60 to 109 (KSHHGEEERPEFVAYPHLRIRSKPFPWGDGNHTLFHNPHVNPLPTGYEDE) the chain is on the mitochondrial intermembrane side.

The protein belongs to the cytochrome c oxidase subunit 6A family. Component of the cytochrome c oxidase (complex IV, CIV), a multisubunit enzyme composed of 14 subunits. The complex is composed of a catalytic core of 3 subunits MT-CO1, MT-CO2 and MT-CO3, encoded in the mitochondrial DNA, and 11 supernumerary subunits COX4I1 (or COX4I2), COX5A, COX5B, COX6A2 (or COX6A1), COX6B1 (or COX6B2), COX6C, COX7A1 (or COX7A2), COX7B, COX7C, COX8B and NDUFA4, which are encoded in the nuclear genome. The complex exists as a monomer or a dimer and forms supercomplexes (SCs) in the inner mitochondrial membrane with NADH-ubiquinone oxidoreductase (complex I, CI) and ubiquinol-cytochrome c oxidoreductase (cytochrome b-c1 complex, complex III, CIII), resulting in different assemblies (supercomplex SCI(1)III(2)IV(1) and megacomplex MCI(2)III(2)IV(2)).

The protein resides in the mitochondrion inner membrane. Its pathway is energy metabolism; oxidative phosphorylation. Component of the cytochrome c oxidase, the last enzyme in the mitochondrial electron transport chain which drives oxidative phosphorylation. The respiratory chain contains 3 multisubunit complexes succinate dehydrogenase (complex II, CII), ubiquinol-cytochrome c oxidoreductase (cytochrome b-c1 complex, complex III, CIII) and cytochrome c oxidase (complex IV, CIV), that cooperate to transfer electrons derived from NADH and succinate to molecular oxygen, creating an electrochemical gradient over the inner membrane that drives transmembrane transport and the ATP synthase. Cytochrome c oxidase is the component of the respiratory chain that catalyzes the reduction of oxygen to water. Electrons originating from reduced cytochrome c in the intermembrane space (IMS) are transferred via the dinuclear copper A center (CU(A)) of subunit 2 and heme A of subunit 1 to the active site in subunit 1, a binuclear center (BNC) formed by heme A3 and copper B (CU(B)). The BNC reduces molecular oxygen to 2 water molecules unsing 4 electrons from cytochrome c in the IMS and 4 protons from the mitochondrial matrix. This chain is Cytochrome c oxidase subunit 6A1, mitochondrial (COX6A1), found in Bos taurus (Bovine).